We begin with the raw amino-acid sequence, 437 residues long: GTPase Der (437 aa).

2 consecutive EngA-type G domains span residues 3-168 (PLIA…PETE) and 178-353 (IQLA…QNRS). GTP-binding positions include 9-16 (GRPNVGKS), 56-60 (DTGGY), 120-123 (NKVE), 184-191 (GRPNVGKS), 231-235 (DTAGL), and 296-299 (NKWD). One can recognise a KH-like domain in the interval 354 to 437 (RKISTSVLNK…VPISMRFMQK (84 aa)).

Belongs to the TRAFAC class TrmE-Era-EngA-EngB-Septin-like GTPase superfamily. EngA (Der) GTPase family. As to quaternary structure, associates with the 50S ribosomal subunit.

GTPase that plays an essential role in the late steps of ribosome biogenesis. The chain is GTPase Der from Pelodictyon phaeoclathratiforme (strain DSM 5477 / BU-1).